We begin with the raw amino-acid sequence, 505 residues long: Cytochrome P450 monooxygenase iliC (505 aa).

The chain crosses the membrane as a helical span at residues 6-26; the sequence is LIAQHSLTLTIASSVLLVFLL. Cysteine 453 contributes to the heme binding site.

It belongs to the cytochrome P450 family. Heme is required as a cofactor.

The protein localises to the membrane. It catalyses the reaction (3E,5S)-3-[(2E,4E,8S,10E,12Z)-1-hydroxy-4,8-dimethyltetradeca-2,4,10,12-tetraen-1-ylidene]-5-[(4-hydroxyphenyl)methyl]pyrrolidine-2,4-dione + reduced [NADPH--hemoprotein reductase] + O2 = 3-[(2E,4E,8S,10E,12Z)-4,8-dimethyltetradeca-2,4,10,12-tetraenoyl]-4-hydroxy-5-(4-hydroxyphenyl)-1,2-dihydropyridin-2-one + oxidized [NADPH--hemoprotein reductase] + 2 H2O. It functions in the pathway mycotoxin biosynthesis. In terms of biological role, cytochrome P450 monooxygenase; part of the gene cluster that mediates the biosynthesis of ilicicolin H, a 4-hydroxy-2-pyridonealkaloid that has potent and broad antifungal activities by inhibiting the mitochondrial respiration chain. IliC catalyzes the ring expansion of the tetramate intermediate to the acyclic 2-pyridone intermediate that contains the trans bis-diene chain. The biosynthesis of ilicicolin H starts with formation of the tetramic acid by the hybrid PKS-NRPS synthetase iliA with the partnering trans-enoyl reductase iliB since iliA lacks a designated enoylreductase (ER) domain. The cytochrome P450 monooxygenase iliC then catalyzes the ring expansion of the tetramate to the acyclic 2-pyridone. The pericyclase iliD further converts the acyclic 2-pyridone into 8-epi-ilicicolin H. 8-epi-ilicicolin H might then spontaneously convert to ilicicolin H since ilicicolin H is produced in the absence of the epimerase iliE, in contrast to what was observed for the Talaromyces variabilis ilicolin H biosynthetic pathway. The polypeptide is Cytochrome P450 monooxygenase iliC (Neonectria sp. (strain DH2)).